The primary structure comprises 107 residues: MVIRVFIASSSGFVAIKKKQQDVVRFLEANKIEFEEVDITMSEEQRQWMYKNVPPEKKPTQGNPLPPQIFNGDRYCGDYDSFFESKESNTVFSFLGLKPRLASKAEP.

An SH3-binding motif is present at residues 61–67 (QGNPLPP).

Belongs to the SH3BGR family. In terms of tissue distribution, highly expressed in brain, placenta, liver and kidney. Expressed in retina.

It localises to the nucleus. The protein is SH3 domain-binding glutamic acid-rich-like protein 2 (SH3BGRL2) of Homo sapiens (Human).